The primary structure comprises 532 residues: Probable cytochrome c oxidase subunit 1 (532 aa).

8 consecutive transmembrane segments (helical) span residues 33–53 (IMYIIFAVFAGIVGGLFSLLF), 74–94 (VLITAHAVIMVFFMIMPALFG), 95–115 (GFGNYFVPLLIGAPDMAFPRL), 118–138 (ISFWLLVPAFLLLMGSAFVDG), 163–183 (MAIFSLHLTGLSSILGSINLI), 200–220 (PLFVWSILVTAFLIILAMPVL), 252–272 (LFWFFGHPEVYIVILPGFGIV), and 284–304 (IFGYQGMIGAMVIIGFVGFIV). His79 is a binding site for Fe(II)-heme a. Positions 258 and 262 each coordinate Cu cation. 2 residues coordinate Cu cation: His307 and His308. 2 helical membrane passes run 318–338 (ALIYFTAGTMIIAVPTGIKIF) and 355–375 (MLFSIGFIILFTIGGVTGIIL). His393 contacts heme a3. The next 3 helical transmembrane spans lie at 394 to 414 (FHYTMSLGALFTAFAGFYYWF), 431 to 451 (FWITFIGVNLTFFPQHFLGLA), and 473 to 493 (IGAGISMFAALYFVFIVFYTL). Residue His395 coordinates Fe(II)-heme a.

The protein belongs to the heme-copper respiratory oxidase family.

The protein localises to the cell membrane. It catalyses the reaction 4 Fe(II)-[cytochrome c] + O2 + 8 H(+)(in) = 4 Fe(III)-[cytochrome c] + 2 H2O + 4 H(+)(out). The protein operates within energy metabolism; oxidative phosphorylation. Its function is as follows. Cytochrome c oxidase is the component of the respiratory chain that catalyzes the reduction of oxygen to water. Subunits 1-3 form the functional core of the enzyme complex. CO I is the catalytic subunit of the enzyme. Electrons originating in cytochrome c are transferred via the copper A center of subunit 2 and heme A of subunit 1 to the bimetallic center formed by heme A3 and copper B. This is Probable cytochrome c oxidase subunit 1 (ctaD) from Rickettsia conorii (strain ATCC VR-613 / Malish 7).